The sequence spans 352 residues: Maleylacetate reductase (352 aa).

This sequence belongs to the iron-containing alcohol dehydrogenase family.

The enzyme catalyses 3-oxoadipate + NAD(+) = maleylacetate + NADH + H(+). The catalysed reaction is 3-oxoadipate + NADP(+) = maleylacetate + NADPH + H(+). It functions in the pathway xenobiotic degradation; (2,4,5-trichlorophenoxy)acetate degradation. The polypeptide is Maleylacetate reductase (tftE) (Burkholderia cepacia (Pseudomonas cepacia)).